Here is a 159-residue protein sequence, read N- to C-terminus: Cytochrome b6-f complex subunit 4 (159 aa).

3 helical membrane-spanning segments follow: residues 36–56 (LLYI…GLAV), 95–115 (LLGV…PFLE), and 131–151 (TVFL…TLPI).

This sequence belongs to the cytochrome b family. PetD subfamily. The 4 large subunits of the cytochrome b6-f complex are cytochrome b6, subunit IV (17 kDa polypeptide, petD), cytochrome f and the Rieske protein, while the 4 small subunits are petG, petL, petM and petN. The complex functions as a dimer.

The protein localises to the plastid. The protein resides in the chloroplast thylakoid membrane. Component of the cytochrome b6-f complex, which mediates electron transfer between photosystem II (PSII) and photosystem I (PSI), cyclic electron flow around PSI, and state transitions. The sequence is that of Cytochrome b6-f complex subunit 4 from Piper cenocladum (Ant piper).